The sequence spans 233 residues: MILIASPFSLAHLEYLHTWHVTIKNIAQQHGLDIKVAIVVSTSHLNTFLPISTALNIECITFPGCGIKEIDLLWARIKLFQHYCAIGARLLWLVSADIRPPVSTWPAIADSLKKGADAVVIPYPSRWNNLIPTVIKEIVVHQKKCLVAVDARHLDTDTQIVGAGMGCIVLTLKALMVRLSIGKQPIKILWPDLHGTAEGIPLEGVEVGWFLNAYAHKLNIRCLGADHIAQHLT.

It belongs to the asfivirus H233R family.

This is an uncharacterized protein from African swine fever virus (isolate Tick/South Africa/Pretoriuskop Pr4/1996) (ASFV).